An 81-amino-acid chain; its full sequence is Acyl carrier protein (81 aa).

One can recognise a Carrier domain in the interval Q4 to V79. S39 is subject to O-(pantetheine 4'-phosphoryl)serine.

It belongs to the acyl carrier protein (ACP) family. In terms of processing, 4'-phosphopantetheine is transferred from CoA to a specific serine of apo-ACP by AcpS. This modification is essential for activity because fatty acids are bound in thioester linkage to the sulfhydryl of the prosthetic group.

The protein localises to the plastid. It localises to the chloroplast. It functions in the pathway lipid metabolism; fatty acid biosynthesis. In terms of biological role, carrier of the growing fatty acid chain in fatty acid biosynthesis. This Guillardia theta (Cryptophyte) protein is Acyl carrier protein.